The primary structure comprises 90 residues: Large ribosomal subunit protein bL27 (90 aa).

The protein belongs to the bacterial ribosomal protein bL27 family.

In Rhodopseudomonas palustris (strain BisB5), this protein is Large ribosomal subunit protein bL27.